The sequence spans 1358 residues: DNA-directed RNA polymerase subunit beta (1358 aa).

It belongs to the RNA polymerase beta chain family. In terms of assembly, the RNAP catalytic core consists of 2 alpha, 1 beta, 1 beta' and 1 omega subunit. When a sigma factor is associated with the core the holoenzyme is formed, which can initiate transcription.

It carries out the reaction RNA(n) + a ribonucleoside 5'-triphosphate = RNA(n+1) + diphosphate. In terms of biological role, DNA-dependent RNA polymerase catalyzes the transcription of DNA into RNA using the four ribonucleoside triphosphates as substrates. The protein is DNA-directed RNA polymerase subunit beta of Francisella tularensis subsp. novicida (strain U112).